The sequence spans 503 residues: Aspartyl/glutamyl-tRNA(Asn/Gln) amidotransferase subunit B (503 aa).

The protein belongs to the GatB/GatE family. GatB subfamily. In terms of assembly, heterotrimer of A, B and C subunits.

The enzyme catalyses L-glutamyl-tRNA(Gln) + L-glutamine + ATP + H2O = L-glutaminyl-tRNA(Gln) + L-glutamate + ADP + phosphate + H(+). It catalyses the reaction L-aspartyl-tRNA(Asn) + L-glutamine + ATP + H2O = L-asparaginyl-tRNA(Asn) + L-glutamate + ADP + phosphate + 2 H(+). Allows the formation of correctly charged Asn-tRNA(Asn) or Gln-tRNA(Gln) through the transamidation of misacylated Asp-tRNA(Asn) or Glu-tRNA(Gln) in organisms which lack either or both of asparaginyl-tRNA or glutaminyl-tRNA synthetases. The reaction takes place in the presence of glutamine and ATP through an activated phospho-Asp-tRNA(Asn) or phospho-Glu-tRNA(Gln). The polypeptide is Aspartyl/glutamyl-tRNA(Asn/Gln) amidotransferase subunit B (Cereibacter sphaeroides (strain KD131 / KCTC 12085) (Rhodobacter sphaeroides)).